Here is a 134-residue protein sequence, read N- to C-terminus: Aspartate 1-decarboxylase (134 aa).

Ser-25 (schiff-base intermediate with substrate; via pyruvic acid) is an active-site residue. Residue Ser-25 is modified to Pyruvic acid (Ser). Thr-57 contacts substrate. The Proton donor role is filled by Tyr-58. Residue 73–75 (GAA) coordinates substrate.

This sequence belongs to the PanD family. Heterooctamer of four alpha and four beta subunits. It depends on pyruvate as a cofactor. Is synthesized initially as an inactive proenzyme, which is activated by self-cleavage at a specific serine bond to produce a beta-subunit with a hydroxyl group at its C-terminus and an alpha-subunit with a pyruvoyl group at its N-terminus.

It is found in the cytoplasm. The enzyme catalyses L-aspartate + H(+) = beta-alanine + CO2. Its pathway is cofactor biosynthesis; (R)-pantothenate biosynthesis; beta-alanine from L-aspartate: step 1/1. In terms of biological role, catalyzes the pyruvoyl-dependent decarboxylation of aspartate to produce beta-alanine. The polypeptide is Aspartate 1-decarboxylase (Geobacter sp. (strain M21)).